A 201-amino-acid polypeptide reads, in one-letter code: Prostamide/prostaglandin F synthase (201 aa).

It belongs to the peroxiredoxin-like PRXL2 family. Prostamide/prostaglandin F synthase subfamily.

It localises to the cytoplasm. The protein localises to the cytosol. The catalysed reaction is prostaglandin H2 + [thioredoxin]-dithiol = prostaglandin F2alpha + [thioredoxin]-disulfide. It carries out the reaction prostamide F2alpha + [thioredoxin]-disulfide = prostamide H2 + [thioredoxin]-dithiol. Catalyzes the reduction of prostaglandin-ethanolamide H(2) (prostamide H(2)) to prostamide F(2alpha) with NADPH as proton donor. Also able to reduce prostaglandin H(2) to prostaglandin F(2alpha). This is Prostamide/prostaglandin F synthase (prxl2b) from Xenopus tropicalis (Western clawed frog).